The chain runs to 249 residues: Sugar fermentation stimulation protein homolog (249 aa).

It belongs to the SfsA family.

The polypeptide is Sugar fermentation stimulation protein homolog (Prochlorococcus marinus (strain MIT 9515)).